A 266-amino-acid polypeptide reads, in one-letter code: Eukaryotic translation initiation factor 3 subunit J (266 aa).

Disordered regions lie at residues 1 to 142 and 215 to 243; these read MAPS…VSDS and MSNEKMREERAADKGNKKSKAAKTKVSLV. The span at 26–44 shows a compositional bias: acidic residues; sequence DEEEEDVLDSWDAAEDSEV. A coiled-coil region spans residues 40-99; the sequence is EDSEVEREKAAKAAEAKAKAEAEAAAKKKSKAQRIQEHKEERKKREEEDSSSESEEDEAE. Composition is skewed to basic and acidic residues over residues 45 to 65 and 73 to 86; these read EREKAAKAAEAKAKAEAEAAA and RIQEHKEERKKREE. The span at 87-97 shows a compositional bias: acidic residues; the sequence is EDSSSESEEDE. Basic and acidic residues-rich tracts occupy residues 98–118 and 218–230; these read AERRARLRRTEKDSDLKHAED and EKMREERAADKGN.

It belongs to the eIF-3 subunit J family. As to quaternary structure, component of the eukaryotic translation initiation factor 3 (eIF-3) complex.

Its subcellular location is the cytoplasm. Component of the eukaryotic translation initiation factor 3 (eIF-3) complex, which is involved in protein synthesis of a specialized repertoire of mRNAs and, together with other initiation factors, stimulates binding of mRNA and methionyl-tRNAi to the 40S ribosome. The eIF-3 complex specifically targets and initiates translation of a subset of mRNAs involved in cell proliferation. The sequence is that of Eukaryotic translation initiation factor 3 subunit J (hcr1) from Aspergillus terreus (strain NIH 2624 / FGSC A1156).